The following is a 165-amino-acid chain: Small ribosomal subunit protein eS10 (165 aa).

The disordered stretch occupies residues 92-165; it reads ATLRRSRPET…FGRGRGQAPQ (74 aa). Positions 97-128 are enriched in basic and acidic residues; sequence SRPETGRPRPKGLEGERPPRLPRGETDRDTYR. The segment covering 142 to 153 has biased composition (low complexity); that stretch reads AGAGAATEFQFR. Residues 154-165 show a composition bias toward gly residues; that stretch reads GGFGRGRGQAPQ.

The protein belongs to the eukaryotic ribosomal protein eS10 family. In terms of assembly, component of the small ribosomal subunit.

It localises to the cytoplasm. The protein resides in the nucleus. Its subcellular location is the nucleolus. Functionally, component of the 40S ribosomal subunit. The ribosome is a large ribonucleoprotein complex responsible for the synthesis of proteins in the cell. In Xenopus laevis (African clawed frog), this protein is Small ribosomal subunit protein eS10 (rps10).